Here is a 155-residue protein sequence, read N- to C-terminus: Small ribosomal subunit protein uS7cz/uS7cy (155 aa).

Belongs to the universal ribosomal protein uS7 family. Part of the 30S ribosomal subunit.

The protein resides in the plastid. The protein localises to the chloroplast. Functionally, one of the primary rRNA binding proteins, it binds directly to 16S rRNA where it nucleates assembly of the head domain of the 30S subunit. The protein is Small ribosomal subunit protein uS7cz/uS7cy (rps7-A) of Nymphaea alba (White water-lily).